Here is a 737-residue protein sequence, read N- to C-terminus: Alpha-adducin (737 aa).

N-acetylmethionine is present on Met1. The disordered stretch occupies residues 1–21 (MNGDSRAAVVTSPPPTTAPHK). Ser12 is modified (phosphoserine). Ser59 bears the Phosphoserine; by PKA mark. Phosphoserine is present on Ser64. Thr331 is modified (phosphothreonine). Ser334, Ser353, Ser355, Ser358, and Ser366 each carry phosphoserine. Ser408 bears the Phosphoserine; by PKA mark. Polar residues predominate over residues 419-430 (YSFTSDGDSGTC). Disordered stretches follow at residues 419–490 (YSFT…NLFV) and 576–737 (RREV…KSES). Ser427 bears the Phosphoserine mark. A Phosphothreonine modification is found at Thr429. Ser431 carries the post-translational modification Phosphoserine. At Ser436 the chain carries Phosphoserine; by PKA. At Thr445 the chain carries Phosphothreonine; by ROCK2. Ser464 and Ser465 each carry phosphoserine. Position 480 is a phosphothreonine; by ROCK2 (Thr480). Ser481 carries the post-translational modification Phosphoserine; by PKA. Residues 576–601 (RREVERKQKGSEENLDEAREQKEKSP) show a composition bias toward basic and acidic residues. 3 positions are modified to phosphoserine: Ser586, Ser600, and Ser613. Over residues 602–614 (PDQPAVPYPPPST) the composition is skewed to pro residues. Thr614 is modified (phosphothreonine). A phosphoserine mark is found at Ser678, Ser707, Ser710, and Ser714. The span at 687 to 714 (PVAEEAAPSAAEEGAAADPGSDGSPGKS) shows a compositional bias: low complexity. The span at 715–737 (PSKKKKKFRTPSFLKKSKKKSES) shows a compositional bias: basic residues. The residue at position 716 (Ser716) is a Phosphoserine; by PKC. Residues 717-734 (KKKKKFRTPSFLKKSKKK) are interaction with calmodulin. Ser726 carries the post-translational modification Phosphoserine; by PKA and PKC.

The protein belongs to the aldolase class II family. Adducin subfamily. As to quaternary structure, heterodimer of an alpha and a beta subunit or an alpha and a gamma subunit.

It is found in the cytoplasm. The protein resides in the cytoskeleton. Its subcellular location is the cell membrane. Functionally, membrane-cytoskeleton-associated protein that promotes the assembly of the spectrin-actin network. Binds to calmodulin. The sequence is that of Alpha-adducin (ADD1) from Pongo abelii (Sumatran orangutan).